We begin with the raw amino-acid sequence, 60 residues long: Toxin TdNa2 (60 aa).

In terms of domain architecture, LCN-type CS-alpha/beta spans 1–59 (RDAYPADWRGCKPSCPWGSSSWCNEECTSLGGSSGYCAWPACWCYGLPDSVRYYNNKCH). 4 cysteine pairs are disulfide-bonded: C11–C58, C15–C37, C23–C42, and C27–C44.

It belongs to the long (4 C-C) scorpion toxin superfamily. Sodium channel inhibitor family. Beta subfamily. As to expression, expressed by the venom gland.

The protein resides in the secreted. In terms of biological role, inhibits the sodium currents (Nav) in an apparent irreversible manner. Produces small depolarization and induces repetitive firing in squid axons. Is specific for arthropods (crickets, triatomides, crabs and squids), but is non-toxic to mice. The protein is Toxin TdNa2 of Tityus discrepans (Venezuelan scorpion).